Consider the following 121-residue polypeptide: Large ribosomal subunit protein uL18 (121 aa).

Belongs to the universal ribosomal protein uL18 family. In terms of assembly, part of the 50S ribosomal subunit; part of the 5S rRNA/L5/L18/L25 subcomplex. Contacts the 5S and 23S rRNAs.

Functionally, this is one of the proteins that bind and probably mediate the attachment of the 5S RNA into the large ribosomal subunit, where it forms part of the central protuberance. The polypeptide is Large ribosomal subunit protein uL18 (Ehrlichia chaffeensis (strain ATCC CRL-10679 / Arkansas)).